The sequence spans 580 residues: E3 ubiquitin-protein ligase TRIM45 (580 aa).

Residues 29 to 98 (CPLCLGLFKA…QIGILCPVCD (70 aa)) form an RING-type zinc finger. B box-type zinc fingers lie at residues 130–176 (GQGL…MVDL) and 186–227 (GKPI…CDFT). The Zn(2+) site is built by Cys135, Cys138, Cys158, His162, Cys191, His194, Cys214, and His219. A coiled-coil region spans residues 281 to 335 (SEGYIKAIEEHRDKLLKQLEDIRAQKENSLQLQKAQLEQLLADMRTGVEFTEHLL). The stretch at 394-497 (TKEVDPAKCV…VQGSPFTVMV (104 aa)) is one Filamin repeat.

The protein belongs to the TRIM/RBCC family. In terms of tissue distribution, expressed in skeletal muscle, brain, heart and pancreas.

Its subcellular location is the cytoplasm. It is found in the nucleus. It catalyses the reaction S-ubiquitinyl-[E2 ubiquitin-conjugating enzyme]-L-cysteine + [acceptor protein]-L-lysine = [E2 ubiquitin-conjugating enzyme]-L-cysteine + N(6)-ubiquitinyl-[acceptor protein]-L-lysine.. Functionally, E3 ubiquitin-protein ligase that plays a role in the regulation of inflammatory response. Mechanistically, mediates the 'Lys-48'-linked polyubiquitination of TAB2, a regulatory protein of the kinase TAK1, leading to its degradation via the proteasomal pathway and inhibition of the TLR-mediated inflammatory immune response. May act as a transcriptional repressor in mitogen-activated protein kinase signaling pathway. The protein is E3 ubiquitin-protein ligase TRIM45 (TRIM45) of Homo sapiens (Human).